We begin with the raw amino-acid sequence, 717 residues long: Photosystem I P700 chlorophyll a apoprotein A1 (717 aa).

The next 8 helical transmembrane spans lie at 58 to 81 (VFSA…FHGA), 144 to 167 (LYCT…FHYH), 183 to 207 (LNHH…HVSL), 279 to 297 (IAHH…GHMY), 334 to 357 (WHAQ…HHMY), 373 to 399 (LSLF…IFMV), 421 to 443 (AIIS…LYIH), and 519 to 537 (FLVH…LILL). [4Fe-4S] cluster-binding residues include cysteine 561 and cysteine 570. The next 2 membrane-spanning stretches (helical) occupy residues 577–598 (HVFL…HFSW) and 652–674 (LSAY…MFLF). Histidine 663 is a binding site for chlorophyll a'. Residues methionine 671 and tyrosine 679 each contribute to the chlorophyll a site. Tryptophan 680 is a binding site for phylloquinone. Residues 712 to 717 (AVGVTH) traverse the membrane as a helical segment.

The protein belongs to the PsaA/PsaB family. The PsaA/B heterodimer binds the P700 chlorophyll special pair and subsequent electron acceptors. PSI consists of a core antenna complex that captures photons, and an electron transfer chain that converts photonic excitation into a charge separation. The eukaryotic PSI reaction center is composed of at least 11 subunits. P700 is a chlorophyll a/chlorophyll a' dimer, A0 is one or more chlorophyll a, A1 is one or both phylloquinones and FX is a shared 4Fe-4S iron-sulfur center. is required as a cofactor.

Its subcellular location is the plastid. The protein resides in the chloroplast thylakoid membrane. The enzyme catalyses reduced [plastocyanin] + hnu + oxidized [2Fe-2S]-[ferredoxin] = oxidized [plastocyanin] + reduced [2Fe-2S]-[ferredoxin]. In terms of biological role, psaA and PsaB bind P700, the primary electron donor of photosystem I (PSI), as well as the electron acceptors A0, A1 and FX. PSI is a plastocyanin-ferredoxin oxidoreductase, converting photonic excitation into a charge separation, which transfers an electron from the donor P700 chlorophyll pair to the spectroscopically characterized acceptors A0, A1, FX, FA and FB in turn. Oxidized P700 is reduced on the lumenal side of the thylakoid membrane by plastocyanin. The protein is Photosystem I P700 chlorophyll a apoprotein A1 of Drimys winteri (Winter's bark).